Here is a 386-residue protein sequence, read N- to C-terminus: Mannitol-1-phosphate 5-dehydrogenase (386 aa).

4–15 serves as a coordination point for NAD(+); the sequence is AVHFGAGNIGRG.

Belongs to the mannitol dehydrogenase family.

It catalyses the reaction D-mannitol 1-phosphate + NAD(+) = beta-D-fructose 6-phosphate + NADH + H(+). This is Mannitol-1-phosphate 5-dehydrogenase from Oceanobacillus iheyensis (strain DSM 14371 / CIP 107618 / JCM 11309 / KCTC 3954 / HTE831).